The chain runs to 245 residues: MKIDYLTLFPEMFDGVLNHSIMKRAQENNKLQINTVNFRDYAINKHNQVDDYPYGGGQGMVLKPEPVFNAMEDLDVTEQTRVILMCPQGEPFSHQKAVELSKADHIVFICGHYEGYDERIRTHLVTDEISMGDYVLTGGELPAMTMTDAIVRLIPGVLGNEQSHQDDSFSDGLLEFPQYTRPREFKGLTVPDVLLSGNHANIDAWRHEQKLIRTYNKRPDLIEKYPLTNADKQILERYKIGLKKG.

Residues Gly111 and 131–136 (MGDYVL) each bind S-adenosyl-L-methionine.

The protein belongs to the RNA methyltransferase TrmD family. As to quaternary structure, homodimer.

The protein localises to the cytoplasm. The enzyme catalyses guanosine(37) in tRNA + S-adenosyl-L-methionine = N(1)-methylguanosine(37) in tRNA + S-adenosyl-L-homocysteine + H(+). In terms of biological role, specifically methylates guanosine-37 in various tRNAs. In Staphylococcus aureus (strain USA300), this protein is tRNA (guanine-N(1)-)-methyltransferase.